Consider the following 223-residue polypeptide: MAAQPTIREVLFNPVFQNNPIGLQILGICSALAVTSNLKTATVMAIALTLVTGFSNLFISMIRRQIPSSIRMIVQMVIIASLVIVVDQVLKAYAYSLSKQLSVFVGLIITNCIVMGRAEAFAMANPPLVSFFDGIGNGLGYSAMLLVLGFIRELFGAGKLYGISVLPTVNDGGWYQPNGLLLLPPSAFFLIGLIIWALRTWKKDQVEAPAYRMAPQVSSKEAY.

5 helical membrane-spanning segments follow: residues 42-62 (TVMAIALTLVTGFSNLFISMI), 66-86 (IPSSIRMIVQMVIIASLVIVV), 103-123 (VFVGLIITNCIVMGRAEAFAM), 131-151 (FFDGIGNGLGYSAMLLVLGFI), and 178-198 (NGLLLLPPSAFFLIGLIIWAL).

It belongs to the NqrDE/RnfAE family. As to quaternary structure, composed of six subunits; NqrA, NqrB, NqrC, NqrD, NqrE and NqrF.

The protein localises to the cell inner membrane. It carries out the reaction a ubiquinone + n Na(+)(in) + NADH + H(+) = a ubiquinol + n Na(+)(out) + NAD(+). In terms of biological role, NQR complex catalyzes the reduction of ubiquinone-1 to ubiquinol by two successive reactions, coupled with the transport of Na(+) ions from the cytoplasm to the periplasm. NqrA to NqrE are probably involved in the second step, the conversion of ubisemiquinone to ubiquinol. This is Na(+)-translocating NADH-quinone reductase subunit D from Pseudomonas paraeruginosa (strain DSM 24068 / PA7) (Pseudomonas aeruginosa (strain PA7)).